The sequence spans 104 residues: NADH-quinone oxidoreductase subunit K (104 aa).

3 helical membrane passes run 4–24, 28–48, and 64–84; these read VAYY…AFLI, IITI…SFVA, and IFVF…LAII.

The protein belongs to the complex I subunit 4L family. NDH-1 is composed of 14 different subunits. Subunits NuoA, H, J, K, L, M, N constitute the membrane sector of the complex.

It localises to the cell inner membrane. The enzyme catalyses a quinone + NADH + 5 H(+)(in) = a quinol + NAD(+) + 4 H(+)(out). In terms of biological role, NDH-1 shuttles electrons from NADH, via FMN and iron-sulfur (Fe-S) centers, to quinones in the respiratory chain. The immediate electron acceptor for the enzyme in this species is believed to be ubiquinone. Couples the redox reaction to proton translocation (for every two electrons transferred, four hydrogen ions are translocated across the cytoplasmic membrane), and thus conserves the redox energy in a proton gradient. In Acidobacterium capsulatum (strain ATCC 51196 / DSM 11244 / BCRC 80197 / JCM 7670 / NBRC 15755 / NCIMB 13165 / 161), this protein is NADH-quinone oxidoreductase subunit K.